Here is a 124-residue protein sequence, read N- to C-terminus: Small ribosomal subunit protein uS13 (124 aa).

The interval 97-124 (PVRGQRTKTNARTRKGPKRTIAGKKKAR) is disordered.

This sequence belongs to the universal ribosomal protein uS13 family. In terms of assembly, part of the 30S ribosomal subunit. Forms a loose heterodimer with protein S19. Forms two bridges to the 50S subunit in the 70S ribosome.

Located at the top of the head of the 30S subunit, it contacts several helices of the 16S rRNA. In the 70S ribosome it contacts the 23S rRNA (bridge B1a) and protein L5 of the 50S subunit (bridge B1b), connecting the 2 subunits; these bridges are implicated in subunit movement. Contacts the tRNAs in the A and P-sites. This Mycolicibacterium gilvum (strain PYR-GCK) (Mycobacterium gilvum (strain PYR-GCK)) protein is Small ribosomal subunit protein uS13.